Here is a 563-residue protein sequence, read N- to C-terminus: Light-independent protochlorophyllide reductase subunit B (563 aa).

Asp36 is a binding site for [4Fe-4S] cluster. The active-site Proton donor is Asp293. Residue 437–438 (GM) coordinates substrate. The disordered stretch occupies residues 459 to 478 (ERREAEFGNQKVETGEPGTG).

Belongs to the ChlB/BchB/BchZ family. As to quaternary structure, protochlorophyllide reductase is composed of three subunits; BchL, BchN and BchB. Forms a heterotetramer of two BchB and two BchN subunits. [4Fe-4S] cluster is required as a cofactor.

The catalysed reaction is chlorophyllide a + oxidized 2[4Fe-4S]-[ferredoxin] + 2 ADP + 2 phosphate = protochlorophyllide a + reduced 2[4Fe-4S]-[ferredoxin] + 2 ATP + 2 H2O. It participates in porphyrin-containing compound metabolism; bacteriochlorophyll biosynthesis (light-independent). In terms of biological role, component of the dark-operative protochlorophyllide reductase (DPOR) that uses Mg-ATP and reduced ferredoxin to reduce ring D of protochlorophyllide (Pchlide) to form chlorophyllide a (Chlide). This reaction is light-independent. The NB-protein (BchN-BchB) is the catalytic component of the complex. This Roseiflexus castenholzii (strain DSM 13941 / HLO8) protein is Light-independent protochlorophyllide reductase subunit B.